A 214-amino-acid chain; its full sequence is ATP phosphoribosyltransferase (214 aa).

The protein belongs to the ATP phosphoribosyltransferase family. Short subfamily. As to quaternary structure, heteromultimer composed of HisG and HisZ subunits.

It is found in the cytoplasm. The catalysed reaction is 1-(5-phospho-beta-D-ribosyl)-ATP + diphosphate = 5-phospho-alpha-D-ribose 1-diphosphate + ATP. It functions in the pathway amino-acid biosynthesis; L-histidine biosynthesis; L-histidine from 5-phospho-alpha-D-ribose 1-diphosphate: step 1/9. Catalyzes the condensation of ATP and 5-phosphoribose 1-diphosphate to form N'-(5'-phosphoribosyl)-ATP (PR-ATP). Has a crucial role in the pathway because the rate of histidine biosynthesis seems to be controlled primarily by regulation of HisG enzymatic activity. This is ATP phosphoribosyltransferase from Ruminiclostridium cellulolyticum (strain ATCC 35319 / DSM 5812 / JCM 6584 / H10) (Clostridium cellulolyticum).